Reading from the N-terminus, the 400-residue chain is MNEPFTHAIPILHTLHEHGYQAYFVGGAVRDVLLGREIGDIDIATDATPDTVESLFEKTVDVGKEHGTVIVLHDGMSYEVTTFRTESEYEDFRRPKEVAFITSLKEDLLRRDLTINAMAMDINGEIIDHVGGKQDIERKRIQTVGDPACRFQEDALRMMRAIRFLSQLGFELAAETAEAMEKDKHLLANISVERKKIEMEKLLKGRYCERAIKVLISTKLYEELPGLEKDRLQDSFQTFPYYLLDGLEEVWGAVIHLLGLDEEKAVLFLKEWKLSTKLLKDAVAISRYVDCEWNAEKMFEAGEHVLLSSLKITQLKHERRIFFDELEAAKSSYDALPIKTLQDLAVSGKDLMAFRQKTSGKWIAEELDLVKKAVLHNHLENRKEAIEEWLTACDQQLEND.

Residues G27 and R30 each coordinate ATP. Residues G27 and R30 each contribute to the CTP site. Mg(2+) is bound by residues D40 and D42. ATP contacts are provided by R111, D154, R157, R160, and R163. 5 residues coordinate CTP: R111, D154, R157, R160, and R163.

The protein belongs to the tRNA nucleotidyltransferase/poly(A) polymerase family. Bacterial CCA-adding enzyme type 3 subfamily. In terms of assembly, homodimer. Mg(2+) serves as cofactor.

It catalyses the reaction a tRNA precursor + 2 CTP + ATP = a tRNA with a 3' CCA end + 3 diphosphate. It carries out the reaction a tRNA with a 3' CCA end + 2 CTP + ATP = a tRNA with a 3' CCACCA end + 3 diphosphate. Its function is as follows. Catalyzes the addition and repair of the essential 3'-terminal CCA sequence in tRNAs without using a nucleic acid template. Adds these three nucleotides in the order of C, C, and A to the tRNA nucleotide-73, using CTP and ATP as substrates and producing inorganic pyrophosphate. tRNA 3'-terminal CCA addition is required both for tRNA processing and repair. Also involved in tRNA surveillance by mediating tandem CCA addition to generate a CCACCA at the 3' terminus of unstable tRNAs. While stable tRNAs receive only 3'-terminal CCA, unstable tRNAs are marked with CCACCA and rapidly degraded. This chain is CCA-adding enzyme, found in Bacillus pumilus (strain SAFR-032).